A 191-amino-acid chain; its full sequence is MGKRASKLKPEEVEELKQQTYFTEAEIKQWHKGFRKDCPDGKLTLEGFTKIYQQFFPFGDPSKFANFVFNVFDENKDGFISFGEFLQALSVTSRGTVEEKLKWAFRLYDLDNDGFITRDELLDIVDAIYRMVGESVRLPEEENTPEKRVNRIFQVMDKNKDDKLTFDEFLEGSKEDPTIIQALTLCDSGQA.

Glycine 2 is lipidated: N-myristoyl glycine. 4 EF-hand domains span residues 24-59 (EAEIKQWHKGFRKDCPDGKLTLEGFTKIYQQFFPFG), 60-95 (DPSKFANFVFNVFDENKDGFISFGEFLQALSVTSRG), 96-131 (TVEEKLKWAFRLYDLDNDGFITRDELLDIVDAIYRM), and 144-179 (TPEKRVNRIFQVMDKNKDDKLTFDEFLEGSKEDPTI). Residues aspartate 73, asparagine 75, aspartate 77, glutamate 84, aspartate 109, aspartate 111, aspartate 113, glutamate 120, aspartate 157, asparagine 159, aspartate 161, lysine 163, and glutamate 168 each contribute to the Ca(2+) site.

It belongs to the recoverin family.

Functionally, neuronal calcium sensor, regulator of G protein-coupled receptor phosphorylation in a calcium dependent manner. Regulates neurite extension and branching by activity-dependent (Ca2+) influx in growth cones. This Aplysia californica (California sea hare) protein is Neuronal calcium sensor 1.